The sequence spans 191 residues: Probable nicotinate-nucleotide adenylyltransferase (191 aa).

The protein belongs to the NadD family.

It carries out the reaction nicotinate beta-D-ribonucleotide + ATP + H(+) = deamido-NAD(+) + diphosphate. The protein operates within cofactor biosynthesis; NAD(+) biosynthesis; deamido-NAD(+) from nicotinate D-ribonucleotide: step 1/1. Its function is as follows. Catalyzes the reversible adenylation of nicotinate mononucleotide (NaMN) to nicotinic acid adenine dinucleotide (NaAD). The sequence is that of Probable nicotinate-nucleotide adenylyltransferase from Staphylococcus epidermidis (strain ATCC 12228 / FDA PCI 1200).